A 491-amino-acid chain; its full sequence is F-box protein At3g59000 (491 aa).

Residues 1–49 (MDRVGSLPDELLSHILSFLTTKEAALTSLLSKRWRYLIAFVPNLAFDDI) form the F-box domain.

As to quaternary structure, part of a SCF (ASK-cullin-F-box) protein ligase complex. Interacts with ASK4.

It is found in the nucleus. Its pathway is protein modification; protein ubiquitination. Its function is as follows. Component of SCF(ASK-cullin-F-box) E3 ubiquitin ligase complexes, which may mediate the ubiquitination and subsequent proteasomal degradation of target proteins. This Arabidopsis thaliana (Mouse-ear cress) protein is F-box protein At3g59000.